Here is a 232-residue protein sequence, read N- to C-terminus: Large ribosomal subunit protein uL1 (232 aa).

Belongs to the universal ribosomal protein uL1 family. As to quaternary structure, part of the 50S ribosomal subunit.

Its function is as follows. Binds directly to 23S rRNA. The L1 stalk is quite mobile in the ribosome, and is involved in E site tRNA release. Protein L1 is also a translational repressor protein, it controls the translation of the L11 operon by binding to its mRNA. The sequence is that of Large ribosomal subunit protein uL1 from Porphyromonas gingivalis (strain ATCC 33277 / DSM 20709 / CIP 103683 / JCM 12257 / NCTC 11834 / 2561).